Consider the following 91-residue polypeptide: Ice-structuring protein (91 aa).

Positions 1-21 (MALSLFTVGQLIFLFWTMRIT) are cleaved as a signal peptide. Residues 22-39 (EANPDPAAKAVPAAAAPD) constitute a propeptide, removed by a dipeptidylpeptidase.

Belongs to the type-I AFP family.

It localises to the secreted. Contributes to protect fish blood from freezing at subzero sea water temperatures. Lowers the blood freezing point. Binds to nascent ice crystals and prevents further growth. This Pseudopleuronectes americanus (Winter flounder) protein is Ice-structuring protein.